Reading from the N-terminus, the 217-residue chain is Protein dao-4 (217 aa).

Positions 1 to 21 (MKIALYSILLITVCYLSSTDA) are cleaved as a signal peptide.

It localises to the nucleus. The protein resides in the secreted. Probably acts downstream of the Wnt signaling pathway. The polypeptide is Protein dao-4 (Caenorhabditis elegans).